Here is a 299-residue protein sequence, read N- to C-terminus: AT-hook motif nuclear-localized protein 25 (299 aa).

Disordered stretches follow at residues 1–87 (MSSY…RDSP) and 216–251 (EEET…CESN). Basic and acidic residues-rich tracts occupy residues 14–23 (HLQRPEDSRT) and 33–42 (NRSEADEAKA). 2 stretches are compositionally biased toward low complexity: residues 44-72 (TTPT…PAGS) and 224-239 (TTGV…QSSE). The a.T hook DNA-binding region spans 63–75 (RRPRGRPAGSKNK). In terms of domain architecture, PPC spans 87–233 (PNVLRSHVLE…TTGVQQQQPE (147 aa)). The span at 240-251 (VTGSGAQACESN) shows a compositional bias: polar residues.

Homodimer. Interacts with AHL27 and AHL29. Expressed in seedlings, leaves, stems, floral tips and flowers.

It localises to the nucleus. In terms of biological role, transcription factor that specifically binds AT-rich DNA sequences related to the nuclear matrix attachment regions (MARs). Binds the DNA sequence GNFEI (GA-negative feedback element I) in the GA3OX1 promoter. Binding to GNFEI sequence is required for GA-negative feedback regulation of GA3OX1. The protein is AT-hook motif nuclear-localized protein 25 of Arabidopsis thaliana (Mouse-ear cress).